The sequence spans 242 residues: Lectin-like protein At1g53060 (242 aa).

The tract at residues 3 to 237 is legume-lectin like; it reads FHGDAEYASE…RHEILDWSFE (235 aa). A Phosphoserine modification is found at Ser-207.

The protein belongs to the leguminous lectin family.

This chain is Lectin-like protein At1g53060, found in Arabidopsis thaliana (Mouse-ear cress).